We begin with the raw amino-acid sequence, 157 residues long: MEFLMSKHEADAPHLLIVEARFYDDLADALLDGAKAALDEAGATYDVVTVPGALEIPATISFALDGADNGGTEYDGFVALGTVIRGETYHFDIVSNESCRALTDLSVEESIAIGNGILTVENEEQAWVRARREDKDKGGFAARAALTMIGLRKKFGA.

Residues Phe-22, 53–55 (ALE), and 82–84 (TVI) contribute to the 5-amino-6-(D-ribitylamino)uracil site. 87 to 88 (ET) contributes to the (2S)-2-hydroxy-3-oxobutyl phosphate binding site. The active-site Proton donor is the His-90. 5-amino-6-(D-ribitylamino)uracil is bound at residue Asn-115. A (2S)-2-hydroxy-3-oxobutyl phosphate-binding site is contributed by Arg-129.

Belongs to the DMRL synthase family. Homopentamer.

It catalyses the reaction (2S)-2-hydroxy-3-oxobutyl phosphate + 5-amino-6-(D-ribitylamino)uracil = 6,7-dimethyl-8-(1-D-ribityl)lumazine + phosphate + 2 H2O + H(+). It participates in cofactor biosynthesis; riboflavin biosynthesis; riboflavin from 2-hydroxy-3-oxobutyl phosphate and 5-amino-6-(D-ribitylamino)uracil: step 1/2. In terms of biological role, catalyzes the formation of 6,7-dimethyl-8-ribityllumazine by condensation of 5-amino-6-(D-ribitylamino)uracil with 3,4-dihydroxy-2-butanone 4-phosphate. This is the penultimate step in the biosynthesis of riboflavin. The sequence is that of 6,7-dimethyl-8-ribityllumazine synthase 1 (ribH1) from Brucella melitensis biotype 1 (strain ATCC 23456 / CCUG 17765 / NCTC 10094 / 16M).